The following is a 308-amino-acid chain: Acetylglutamate kinase (308 aa).

Substrate contacts are provided by residues 86-87 (GG), arginine 108, and asparagine 201.

This sequence belongs to the acetylglutamate kinase family. ArgB subfamily.

The protein localises to the cytoplasm. The catalysed reaction is N-acetyl-L-glutamate + ATP = N-acetyl-L-glutamyl 5-phosphate + ADP. The protein operates within amino-acid biosynthesis; L-arginine biosynthesis; N(2)-acetyl-L-ornithine from L-glutamate: step 2/4. Its function is as follows. Catalyzes the ATP-dependent phosphorylation of N-acetyl-L-glutamate. This Prochlorococcus marinus (strain MIT 9303) protein is Acetylglutamate kinase.